A 60-amino-acid chain; its full sequence is Homeobox protein engrailed-like B (60 aa).

The homeobox DNA-binding region spans 1–41 (VEQLQRLKSEFGASRYLTEARRQALAQELRLNEAQIKIWFQ).

Belongs to the engrailed homeobox family.

Its subcellular location is the nucleus. The sequence is that of Homeobox protein engrailed-like B from Myxine glutinosa (Atlantic hagfish).